The chain runs to 418 residues: Probable serine hydroxymethyltransferase (418 aa).

(6S)-5,6,7,8-tetrahydrofolate-binding positions include L118 and 122 to 124 (GHL). K226 is subject to N6-(pyridoxal phosphate)lysine. (6S)-5,6,7,8-tetrahydrofolate is bound at residue 351 to 353 (SPF).

The protein belongs to the SHMT family. As to quaternary structure, homodimer. The cofactor is pyridoxal 5'-phosphate.

It localises to the cytoplasm. The catalysed reaction is (6R)-5,10-methylene-5,6,7,8-tetrahydrofolate + glycine + H2O = (6S)-5,6,7,8-tetrahydrofolate + L-serine. It participates in one-carbon metabolism; tetrahydrofolate interconversion. In terms of biological role, catalyzes the reversible interconversion of serine and glycine with tetrahydrofolate (THF) serving as the one-carbon carrier. This reaction serves as the major source of one-carbon groups required for the biosynthesis of purines, thymidylate, methionine, and other important biomolecules. The protein is Probable serine hydroxymethyltransferase of Mesomycoplasma hyopneumoniae (strain 232) (Mycoplasma hyopneumoniae).